We begin with the raw amino-acid sequence, 64 residues long: Large ribosomal subunit protein uL29 (64 aa).

It belongs to the universal ribosomal protein uL29 family.

This chain is Large ribosomal subunit protein uL29, found in Burkholderia ambifaria (strain MC40-6).